A 110-amino-acid chain; its full sequence is Large ribosomal subunit protein eL30 (110 aa).

It belongs to the eukaryotic ribosomal protein eL30 family.

The polypeptide is Large ribosomal subunit protein eL30 (rpl30e) (Methanocaldococcus jannaschii (strain ATCC 43067 / DSM 2661 / JAL-1 / JCM 10045 / NBRC 100440) (Methanococcus jannaschii)).